A 91-amino-acid chain; its full sequence is Small ribosomal subunit protein uS15 (91 aa).

The protein belongs to the universal ribosomal protein uS15 family. Part of the 30S ribosomal subunit. Forms a bridge to the 50S subunit in the 70S ribosome, contacting the 23S rRNA.

Functionally, one of the primary rRNA binding proteins, it binds directly to 16S rRNA where it helps nucleate assembly of the platform of the 30S subunit by binding and bridging several RNA helices of the 16S rRNA. In terms of biological role, forms an intersubunit bridge (bridge B4) with the 23S rRNA of the 50S subunit in the ribosome. In Hydrogenobaculum sp. (strain Y04AAS1), this protein is Small ribosomal subunit protein uS15.